A 139-amino-acid chain; its full sequence is Large ribosomal subunit protein bL17 (139 aa).

Positions Glu-120 to Ala-139 are disordered.

As to quaternary structure, part of the 50S ribosomal subunit. Contacts protein L32. Post-translationally, may be methylated thrice, on undetermined residues.

This chain is Large ribosomal subunit protein bL17, found in Rhodopseudomonas palustris (strain ATCC BAA-98 / CGA009).